We begin with the raw amino-acid sequence, 543 residues long: Probable bifunctional tRNA threonylcarbamoyladenosine biosynthesis protein (543 aa).

The segment at 1-329 (MDISKDLICI…YRSDMVEVNW (329 aa)) is kae1. The Fe cation site is built by His112, His116, and Tyr133. L-threonylcarbamoyladenylate contacts are provided by residues 133–137 (YVSGG), Asp165, Gly178, Glu182, and Asn262. Asp290 contributes to the Fe cation binding site. One can recognise a Protein kinase domain in the interval 342-543 (IIPEHLIGKG…KEVEKRARYL (202 aa)). Residues 348–356 (IGKGAEADI) and Lys369 contribute to the ATP site. Asp461 functions as the Proton acceptor; for kinase activity in the catalytic mechanism.

This sequence in the N-terminal section; belongs to the KAE1 / TsaD family. In the C-terminal section; belongs to the protein kinase superfamily. Tyr protein kinase family. BUD32 subfamily. As to quaternary structure, component of the KEOPS complex that consists of Kae1, Bud32, Cgi121 and Pcc1; the whole complex dimerizes. Fe(2+) is required as a cofactor.

The protein resides in the cytoplasm. The catalysed reaction is L-seryl-[protein] + ATP = O-phospho-L-seryl-[protein] + ADP + H(+). The enzyme catalyses L-threonyl-[protein] + ATP = O-phospho-L-threonyl-[protein] + ADP + H(+). It catalyses the reaction L-threonylcarbamoyladenylate + adenosine(37) in tRNA = N(6)-L-threonylcarbamoyladenosine(37) in tRNA + AMP + H(+). Required for the formation of a threonylcarbamoyl group on adenosine at position 37 (t(6)A37) in tRNAs that read codons beginning with adenine. Is a component of the KEOPS complex that is probably involved in the transfer of the threonylcarbamoyl moiety of threonylcarbamoyl-AMP (TC-AMP) to the N6 group of A37. The Kae1 domain likely plays a direct catalytic role in this reaction. The Bud32 domain probably displays kinase activity that regulates Kae1 function. This Methanococcus maripaludis (strain C6 / ATCC BAA-1332) protein is Probable bifunctional tRNA threonylcarbamoyladenosine biosynthesis protein.